A 510-amino-acid polypeptide reads, in one-letter code: NAD(P)H-quinone oxidoreductase subunit 2 A, chloroplastic (510 aa).

The next 13 membrane-spanning stretches (helical) occupy residues 24 to 44 (LLLF…GLIL), 57 to 77 (IPWL…ALLF), 99 to 119 (IFQF…VEYI), 124 to 144 (MAIT…MFLC), 149 to 169 (LITI…LSGY), 183 to 203 (YLLM…WLYG), 227 to 247 (PGIS…LSPA), 295 to 315 (WHLL…LIAI), 323 to 343 (MLAY…IVGD), 347 to 367 (GYAS…GTFA), 395 to 415 (ALSS…AGFF), 418 to 438 (LHLF…IGLL), and 484 to 504 (MIVC…IIAI).

The protein belongs to the complex I subunit 2 family. NDH is composed of at least 16 different subunits, 5 of which are encoded in the nucleus.

The protein localises to the plastid. Its subcellular location is the chloroplast thylakoid membrane. The catalysed reaction is a plastoquinone + NADH + (n+1) H(+)(in) = a plastoquinol + NAD(+) + n H(+)(out). The enzyme catalyses a plastoquinone + NADPH + (n+1) H(+)(in) = a plastoquinol + NADP(+) + n H(+)(out). Functionally, NDH shuttles electrons from NAD(P)H:plastoquinone, via FMN and iron-sulfur (Fe-S) centers, to quinones in the photosynthetic chain and possibly in a chloroplast respiratory chain. The immediate electron acceptor for the enzyme in this species is believed to be plastoquinone. Couples the redox reaction to proton translocation, and thus conserves the redox energy in a proton gradient. This chain is NAD(P)H-quinone oxidoreductase subunit 2 A, chloroplastic, found in Platanus occidentalis (Sycamore).